The following is a 202-amino-acid chain: NAD(P)H-quinone oxidoreductase subunit I (202 aa).

4Fe-4S ferredoxin-type domains follow at residues 55–84 (GRIH…VDWV) and 95–124 (KNYS…MTEE). The [4Fe-4S] cluster site is built by Cys64, Cys67, Cys70, Cys74, Cys104, Cys107, Cys110, and Cys114. The segment covering 168–187 (EYDPHVVPSDRPRAGQRPEE) has biased composition (basic and acidic residues). The segment at 168–202 (EYDPHVVPSDRPRAGQRPEELVDQYKQAAAANEEN) is disordered.

This sequence belongs to the complex I 23 kDa subunit family. In terms of assembly, NDH-1 is composed of at least 11 different subunits. [4Fe-4S] cluster is required as a cofactor.

It is found in the cellular thylakoid membrane. It catalyses the reaction a plastoquinone + NADH + (n+1) H(+)(in) = a plastoquinol + NAD(+) + n H(+)(out). The catalysed reaction is a plastoquinone + NADPH + (n+1) H(+)(in) = a plastoquinol + NADP(+) + n H(+)(out). Its function is as follows. NDH-1 shuttles electrons from an unknown electron donor, via FMN and iron-sulfur (Fe-S) centers, to quinones in the respiratory and/or the photosynthetic chain. The immediate electron acceptor for the enzyme in this species is believed to be plastoquinone. Couples the redox reaction to proton translocation, and thus conserves the redox energy in a proton gradient. This Synechococcus elongatus (strain ATCC 33912 / PCC 7942 / FACHB-805) (Anacystis nidulans R2) protein is NAD(P)H-quinone oxidoreductase subunit I.